Consider the following 208-residue polypeptide: MGRKRSASSSRWLAEHFKDQFVQKAHKQKLRSRAYFKLDEIQQTDRLFKPGMTVVDLGAAPGGWSQYAVTQIGSKGRIIACDILDMNPIVGVDFLQGDFREESVLNALLERVGDDMVDVVMSDMAPNFSGMPSVDIPRAMYLVELALDMCRQVLAPKGSFVVKVFQGEGFDDYLRDIRAMFTTVKVRKPEASRDRSREVYIVATGYKG.

Residues glycine 62, tryptophan 64, aspartate 82, aspartate 98, and aspartate 123 each contribute to the S-adenosyl-L-methionine site. Lysine 163 serves as the catalytic Proton acceptor.

The protein belongs to the class I-like SAM-binding methyltransferase superfamily. RNA methyltransferase RlmE family.

It localises to the cytoplasm. It carries out the reaction uridine(2552) in 23S rRNA + S-adenosyl-L-methionine = 2'-O-methyluridine(2552) in 23S rRNA + S-adenosyl-L-homocysteine + H(+). In terms of biological role, specifically methylates the uridine in position 2552 of 23S rRNA at the 2'-O position of the ribose in the fully assembled 50S ribosomal subunit. The chain is Ribosomal RNA large subunit methyltransferase E from Actinobacillus pleuropneumoniae serotype 5b (strain L20).